The sequence spans 331 residues: Very-long-chain 3-oxoacyl-CoA reductase (331 aa).

A helical membrane pass occupies residues 15 to 35 (VQWALAGVGALYISAKVLSYL). NADP(+) contacts are provided by valine 60, aspartate 115, aspartate 123, asparagine 142, tyrosine 209, lysine 213, isoleucine 242, and serine 244. Tyrosine 209 serves as the catalytic Proton donor. Residue lysine 213 is the Lowers pKa of active site Tyr of the active site.

Belongs to the short-chain dehydrogenases/reductases (SDR) family.

It localises to the endoplasmic reticulum membrane. It carries out the reaction a very-long-chain (3R)-3-hydroxyacyl-CoA + NADP(+) = a very-long-chain 3-oxoacyl-CoA + NADPH + H(+). The protein operates within lipid metabolism; fatty acid biosynthesis. Its function is as follows. Component of the microsomal membrane bound fatty acid elongation system, which produces the 26-carbon very long-chain fatty acids (VLCFA) from palmitate. Catalyzes the reduction of the 3-ketoacyl-CoA intermediate that is formed in each cycle of fatty acid elongation. VLCFAs serve as precursors for ceramide and sphingolipids. The protein is Very-long-chain 3-oxoacyl-CoA reductase of Pyricularia oryzae (strain 70-15 / ATCC MYA-4617 / FGSC 8958) (Rice blast fungus).